Here is a 245-residue protein sequence, read N- to C-terminus: Fibroblast growth factor 13 (245 aa).

2 disordered regions span residues 1-37 and 213-245; these read MAAAIASSLIRQKRQAREREKSNACKCVSSPSKSKGN and TEFSRSGSGTPTKSRSVSGVLNGGKSMSQNDST. The tract at residues 1–62 is mediates targeting to the nucleus; it reads MAAAIASSLI…GSKKRRRRRP (62 aa). The segment covering 215–245 has biased composition (polar residues); sequence FSRSGSGTPTKSRSVSGVLNGGKSMSQNDST.

It belongs to the heparin-binding growth factors family.

It localises to the cell projection. The protein localises to the filopodium. Its subcellular location is the growth cone. The protein resides in the dendrite. It is found in the cell membrane. It localises to the sarcolemma. The protein localises to the cytoplasm. Functionally, microtubule-binding protein which directly binds tubulin and is involved in both polymerization and stabilization of microtubules. Through its action on microtubules, may participate in the refinement of axons by negatively regulating axonal and leading processes branching. Plays a crucial role in neuron polarization and migration. Regulates voltage-gated sodium channel transport and function. Required for proper head development, it is involved in neural differentiation through regulation of the mek5-erk5 pathway. The sequence is that of Fibroblast growth factor 13 (fgf13) from Xenopus laevis (African clawed frog).